We begin with the raw amino-acid sequence, 508 residues long: DDB1- and CUL4-associated factor 10 (508 aa).

The interval 1-75 (MSSGHPSDNE…GSASGSGCRG (75 aa)) is disordered. Positions 7-17 (SDNEEPRADLL) are enriched in basic and acidic residues. Over residues 18 to 32 (REEEEEEEEEEDSDE) the composition is skewed to acidic residues. Residues 63-75 (GGTGSASGSGCRG) are compositionally biased toward gly residues. 4 WD repeats span residues 126–165 (QTHG…HIKT), 169–207 (AHED…SKVC), 211–250 (GHAS…EDGC), and 256–295 (FHTR…QSLE). A disordered region spans residues 307-343 (PPLSTEGSSAGSRSGGPRHTIDNKNHPHREGLSPRNS). Residues 325–338 (HTIDNKNHPHREGL) are compositionally biased toward basic and acidic residues. WD repeat units follow at residues 356–396 (DRGN…QEGA), 419–457 (VGRG…AELV), and 475–508 (SHSD…QPHF).

It belongs to the WD repeat DCAF10 family.

The protein operates within protein modification; protein ubiquitination. Its function is as follows. May function as a substrate receptor for CUL4-DDB1 E3 ubiquitin-protein ligase complex. The protein is DDB1- and CUL4-associated factor 10 (dcaf10) of Danio rerio (Zebrafish).